The sequence spans 89 residues: MALDAAVKQSIIKEYATGEGDTGSPEVQVAVLTQRIKDLTEHMKEHKHDYHTQRGLLAMVGRRKRMLSYLKKTDIARYRALIERLGLRR.

The protein belongs to the universal ribosomal protein uS15 family. Part of the 30S ribosomal subunit. Forms a bridge to the 50S subunit in the 70S ribosome, contacting the 23S rRNA.

In terms of biological role, one of the primary rRNA binding proteins, it binds directly to 16S rRNA where it helps nucleate assembly of the platform of the 30S subunit by binding and bridging several RNA helices of the 16S rRNA. Functionally, forms an intersubunit bridge (bridge B4) with the 23S rRNA of the 50S subunit in the ribosome. This is Small ribosomal subunit protein uS15 from Pseudarthrobacter chlorophenolicus (strain ATCC 700700 / DSM 12829 / CIP 107037 / JCM 12360 / KCTC 9906 / NCIMB 13794 / A6) (Arthrobacter chlorophenolicus).